The chain runs to 587 residues: uncharacterized protein (587 aa).

The 366-residue stretch at 61 to 426 (GKGASKKAAL…DLPNWHHDAE (366 aa)) folds into the YcaO domain.

This is an uncharacterized protein from Haemophilus influenzae (strain ATCC 51907 / DSM 11121 / KW20 / Rd).